The chain runs to 464 residues: Dihydrolipoyl dehydrogenase (464 aa).

FAD is bound by residues 33-41, K50, and G113; that span reads EPKYWGGVC. An intrachain disulfide couples C41 to C46. Residues 178-182, E201, and 266-269 each bind NAD(+); these read GAGAI and AIGF. Positions 309 and 317 each coordinate FAD. Catalysis depends on H443, which acts as the Proton acceptor.

The protein belongs to the class-I pyridine nucleotide-disulfide oxidoreductase family. Homodimer. Part of the PDH complex, consisting of multiple copies of AceE (E1), DlaT (E2) and Lpd (E3), and of the BCKADH complex, consisting of multiple copies of BkdA/BkdB (E1), BkdC (E2) and Lpd (E3). Requires FAD as cofactor.

The protein localises to the cytoplasm. It catalyses the reaction N(6)-[(R)-dihydrolipoyl]-L-lysyl-[protein] + NAD(+) = N(6)-[(R)-lipoyl]-L-lysyl-[protein] + NADH + H(+). In terms of biological role, lipoamide dehydrogenase is a component of the alpha-ketoacid dehydrogenase complexes. Catalyzes the reoxidation of dihydrolipoyl groups which are covalently attached to the lipoate acyltransferase components (E2) of the complexes. This Mycobacterium bovis (strain ATCC BAA-935 / AF2122/97) protein is Dihydrolipoyl dehydrogenase (lpd).